We begin with the raw amino-acid sequence, 191 residues long: Oleosin 20.3 kDa (191 aa).

The residue at position 2 (Ala-2) is an N-acetylalanine. Residues 2-54 (ANVDRDRRVHVDRTDKRVHQPNYEDDVGFGGYGGYGAGSDYKSRGPSTNQILA) are polar. 2 helical membrane passes run 52–72 (ILAL…AGLT) and 99–119 (LTIG…LTGL). The hydrophobic stretch occupies residues 55-128 (LIAGVPIGGT…LSSVSWVLNY (74 aa)).

Belongs to the oleosin family.

It localises to the lipid droplet. It is found in the membrane. May have a structural role to stabilize the lipid body during desiccation of the seed by preventing coalescence of the oil. Probably interacts with both lipid and phospholipid moieties of lipid bodies. May also provide recognition signals for specific lipase anchorage in lipolysis during seedling growth. This is Oleosin 20.3 kDa (OL2) from Arabidopsis thaliana (Mouse-ear cress).